A 60-amino-acid chain; its full sequence is Cytotoxin 3 (60 aa).

Cystine bridges form between Cys-3/Cys-21, Cys-14/Cys-38, Cys-42/Cys-53, and Cys-54/Cys-59.

Belongs to the three-finger toxin family. Short-chain subfamily. Type IA cytotoxin sub-subfamily. In terms of assembly, monomer in solution; Homodimer and oligomer in the presence of negatively charged lipids forming a pore with a size ranging between 20 and 30 Angstroms. Expressed by the venom gland.

The protein resides in the secreted. It localises to the target cell membrane. Shows cytolytic activity on many different cells by forming pore in lipid membranes. In vivo, increases heart rate or kills the animal by cardiac arrest. In addition, it binds to heparin with high affinity, interacts with Kv channel-interacting protein 1 (KCNIP1) in a calcium-independent manner, and binds to integrin alpha-V/beta-3 (ITGAV/ITGB3) with moderate affinity. The polypeptide is Cytotoxin 3 (Naja mossambica (Mozambique spitting cobra)).